Consider the following 390-residue polypeptide: Ankyrin repeat domain-containing protein 63 (390 aa).

ANK repeat units lie at residues 11–40, 46–79, 83–112, 116–145, and 153–182; these read AGTR…RSII, QGRT…AVNL, RGRT…DPEA, AGNS…RLGL, and AGLT…RAAA. Disordered regions lie at residues 181 to 213 and 226 to 245; these read AAAA…SPRR and AGGH…ELAS. S193 is subject to Phosphoserine. Residue S304 is modified to Phosphoserine. A disordered region spans residues 320–377; it reads VGLSPHPEGCPGSGRLGLRRRSTAPDIPSLVGEASGPESGPELENNALPFSVPGPKPW.

The protein is Ankyrin repeat domain-containing protein 63 of Mus musculus (Mouse).